Here is a 182-residue protein sequence, read N- to C-terminus: MAVTKAKKIEVTEKLTEDFKKANHAIVGTFNKLTVSKDYELRKAVRSVGGKYSVVKNTLAERAAKGTKIEDAVKGLAGVTSVAFTDGDPVQLAKVLSKYAKDNPEYEFKAGVVDGKVIKLADIDALANMPSKEELYSKLLFLISAPAQRLVTVMNATGRDLAVVLNQGVEKQKFSGGEAPAQ.

The protein belongs to the universal ribosomal protein uL10 family. In terms of assembly, part of the ribosomal stalk of the 50S ribosomal subunit. The N-terminus interacts with L11 and the large rRNA to form the base of the stalk. The C-terminus forms an elongated spine to which L12 dimers bind in a sequential fashion forming a multimeric L10(L12)X complex.

Functionally, forms part of the ribosomal stalk, playing a central role in the interaction of the ribosome with GTP-bound translation factors. In Koribacter versatilis (strain Ellin345), this protein is Large ribosomal subunit protein uL10.